Reading from the N-terminus, the 294-residue chain is Phosphatidylglycerol--prolipoprotein diacylglyceryl transferase (294 aa).

Transmembrane regions (helical) follow at residues 19-39 (VFGFDLALRWYALAYIVGIVL), 69-89 (LLTWVIVGVILGGRLGYVFFY), 101-121 (ILAVWQGGMAFHGGLLGVIAA), 139-159 (IMALGVPPGLLLGRIANFINA), 195-215 (QLYEAGLEGLILGALLIWLVW), 224-244 (GYVAGVFFAGYGVSRFFVEFF), and 267-287 (WGLTMGQCLSLPMILLGIWLI). Arg152 contributes to the a 1,2-diacyl-sn-glycero-3-phospho-(1'-sn-glycerol) binding site.

The protein belongs to the Lgt family.

It localises to the cell inner membrane. The enzyme catalyses L-cysteinyl-[prolipoprotein] + a 1,2-diacyl-sn-glycero-3-phospho-(1'-sn-glycerol) = an S-1,2-diacyl-sn-glyceryl-L-cysteinyl-[prolipoprotein] + sn-glycerol 1-phosphate + H(+). The protein operates within protein modification; lipoprotein biosynthesis (diacylglyceryl transfer). Catalyzes the transfer of the diacylglyceryl group from phosphatidylglycerol to the sulfhydryl group of the N-terminal cysteine of a prolipoprotein, the first step in the formation of mature lipoproteins. This chain is Phosphatidylglycerol--prolipoprotein diacylglyceryl transferase, found in Roseobacter denitrificans (strain ATCC 33942 / OCh 114) (Erythrobacter sp. (strain OCh 114)).